A 641-amino-acid chain; its full sequence is DNA primase (641 aa).

A CHC2-type zinc finger spans residues 41 to 65; the sequence is CPFHDEKSPSFQVSPSKGFFHCFGC. The 85-residue stretch at 262 to 346 folds into the Toprim domain; the sequence is SRAVVVEGYT…AAETYIAIAP (85 aa). Positions 268, 317, and 319 each coordinate Mg(2+). The interval 444-478 is disordered; that stretch reads RDRGGKGPAPDQRQRGGGPQQQAGPMTATPRGPAL.

This sequence belongs to the DnaG primase family. As to quaternary structure, monomer. Interacts with DnaB. Requires Zn(2+) as cofactor. The cofactor is Mg(2+).

The enzyme catalyses ssDNA + n NTP = ssDNA/pppN(pN)n-1 hybrid + (n-1) diphosphate.. Functionally, RNA polymerase that catalyzes the synthesis of short RNA molecules used as primers for DNA polymerase during DNA replication. The protein is DNA primase of Streptomyces coelicolor (strain ATCC BAA-471 / A3(2) / M145).